A 264-amino-acid polypeptide reads, in one-letter code: 3-methyl-2-oxobutanoate hydroxymethyltransferase (264 aa).

Mg(2+) contacts are provided by Asp45 and Asp84. 3-methyl-2-oxobutanoate contacts are provided by residues 45-46, Asp84, and Lys112; that span reads DS. Mg(2+) is bound at residue Glu114. The Proton acceptor role is filled by Glu181.

It belongs to the PanB family. Homodecamer; pentamer of dimers. The cofactor is Mg(2+).

The protein localises to the cytoplasm. The catalysed reaction is 3-methyl-2-oxobutanoate + (6R)-5,10-methylene-5,6,7,8-tetrahydrofolate + H2O = 2-dehydropantoate + (6S)-5,6,7,8-tetrahydrofolate. Its pathway is cofactor biosynthesis; (R)-pantothenate biosynthesis; (R)-pantoate from 3-methyl-2-oxobutanoate: step 1/2. Catalyzes the reversible reaction in which hydroxymethyl group from 5,10-methylenetetrahydrofolate is transferred onto alpha-ketoisovalerate to form ketopantoate. This Shigella boydii serotype 18 (strain CDC 3083-94 / BS512) protein is 3-methyl-2-oxobutanoate hydroxymethyltransferase.